Reading from the N-terminus, the 283-residue chain is MLLYTYRSFDMELPTVDIKDADYIILGLPFDGTTSYKPGARFGPVLIRQATLNLESYILDYDIDIAELKIADAGDVALPVSIEDAIKVAVETIKEVRSINPRALPIFLGGEHSMTYPPVKVLEPKSYVVFDAHLDLRDSYQGSRFNHACVARRIHEMGVKVAIFGVRSGTREEVMFASQSGIEWVHARDYNFDAFVDLVSSLPEPVYVSIDVDVFDLPLVPETGTPEPGGLGFWEVIEALEWLTKRKKVAGFDIMEVSGDRLGNSTSITAAKLLFYVIGMSAR.

Residues His112, Asp131, His133, Asp135, Asp211, and Asp213 each coordinate a divalent metal cation.

This sequence belongs to the arginase family. Agmatinase subfamily. Homotetramer. It depends on a divalent metal cation as a cofactor.

The enzyme catalyses agmatine + H2O = urea + putrescine. Its pathway is amine and polyamine biosynthesis; putrescine biosynthesis via agmatine pathway; putrescine from agmatine: step 1/1. With respect to regulation, inhibited by putrescine. Activity is not affected by arginine and ornithine. Its function is as follows. Catalyzes the formation of putrescine from agmatine. Cannot use arginine. The protein is Agmatinase of Pyrococcus horikoshii (strain ATCC 700860 / DSM 12428 / JCM 9974 / NBRC 100139 / OT-3).